We begin with the raw amino-acid sequence, 156 residues long: CASP-like protein 5C1 (156 aa).

Residues 1-21 lie on the Cytoplasmic side of the membrane; it reads MENRERAGAGAVGSAGSLGLR. Residues 22–42 form a helical membrane-spanning segment; the sequence is VGQAVFSSASLLFMSVGVEFF. The Extracellular portion of the chain corresponds to 43-46; that stretch reads SYTA. The helical transmembrane segment at 47-67 threads the bilayer; the sequence is FCFLVTIMGLVIPWSCTLAMI. Residues 68–81 lie on the Cytoplasmic side of the membrane; the sequence is DVYSILVGCPLRVP. Residues 82-102 form a helical membrane-spanning segment; it reads GVMVIVVIGDWVLAILSLAAA. The Extracellular portion of the chain corresponds to 103–132; it reads SSSAAVIDLLLQFHGSHCSPRFCGRYQLSA. The chain crosses the membrane as a helical span at residues 133 to 153; it reads MMAFLSWFLTAASSLFNLWFI. Topologically, residues 154–156 are cytoplasmic; it reads ASR.

Belongs to the Casparian strip membrane proteins (CASP) family. In terms of assembly, homodimer and heterodimers.

Its subcellular location is the cell membrane. In Oryza sativa subsp. japonica (Rice), this protein is CASP-like protein 5C1.